The sequence spans 430 residues: Adenylosuccinate synthetase (430 aa).

GTP-binding positions include 13–19 and 41–43; these read GDEGKGK and GHT. D14 serves as the catalytic Proton acceptor. Mg(2+) contacts are provided by D14 and G41. IMP contacts are provided by residues 14–17, 39–42, T130, R144, Q225, T240, and R304; these read DEGK and NAGH. Residue H42 is the Proton donor of the active site. Residue 300–306 participates in substrate binding; that stretch reads ATTGRAR. GTP contacts are provided by residues R306, 332 to 334, and 414 to 416; these read KLD and STG.

The protein belongs to the adenylosuccinate synthetase family. Homodimer. Mg(2+) serves as cofactor.

The protein resides in the cytoplasm. It carries out the reaction IMP + L-aspartate + GTP = N(6)-(1,2-dicarboxyethyl)-AMP + GDP + phosphate + 2 H(+). Its pathway is purine metabolism; AMP biosynthesis via de novo pathway; AMP from IMP: step 1/2. Functionally, plays an important role in the de novo pathway of purine nucleotide biosynthesis. Catalyzes the first committed step in the biosynthesis of AMP from IMP. This chain is Adenylosuccinate synthetase, found in Pseudomonas aeruginosa (strain LESB58).